The primary structure comprises 901 residues: Protein translocase subunit SecA (901 aa).

Residues glutamine 89, 107 to 111, and aspartate 502 each bind ATP; that span reads GEGKT. Positions 838 to 883 are disordered; that stretch reads YQQQQAETEAQMHPEHEEAEGGEVSGRVAGFDETDPTTWGNPSRND. Zn(2+) contacts are provided by cysteine 885, cysteine 887, cysteine 896, and histidine 897.

The protein belongs to the SecA family. Monomer and homodimer. Part of the essential Sec protein translocation apparatus which comprises SecA, SecYEG and auxiliary proteins SecDF-YajC and YidC. The cofactor is Zn(2+).

It is found in the cell inner membrane. The protein resides in the cytoplasm. The enzyme catalyses ATP + H2O + cellular proteinSide 1 = ADP + phosphate + cellular proteinSide 2.. Functionally, part of the Sec protein translocase complex. Interacts with the SecYEG preprotein conducting channel. Has a central role in coupling the hydrolysis of ATP to the transfer of proteins into and across the cell membrane, serving both as a receptor for the preprotein-SecB complex and as an ATP-driven molecular motor driving the stepwise translocation of polypeptide chains across the membrane. The chain is Protein translocase subunit SecA from Paracoccus denitrificans (strain Pd 1222).